Reading from the N-terminus, the 379-residue chain is Alcohol dehydrogenase class-2 isozyme 2 (379 aa).

Positions 47, 69, 99, 102, 105, 113, and 176 each coordinate Zn(2+). NAD(+)-binding positions include 205-210 (GLGGVG), Asp229, Lys234, 298-300 (VGV), and Arg374.

It belongs to the zinc-containing alcohol dehydrogenase family. Class-II subfamily. In terms of assembly, homodimer. Zn(2+) serves as cofactor.

It localises to the cytoplasm. The catalysed reaction is a primary alcohol + NAD(+) = an aldehyde + NADH + H(+). It catalyses the reaction a secondary alcohol + NAD(+) = a ketone + NADH + H(+). This is Alcohol dehydrogenase class-2 isozyme 2 (ADH2-2) from Oryctolagus cuniculus (Rabbit).